Here is a 540-residue protein sequence, read N- to C-terminus: Bifunctional ribokinase/ribose-5-phosphate isomerase A (540 aa).

Positions methionine 1 to glutamine 308 are ribokinase. Substrate is bound by residues asparagine 11–aspartate 13, glycine 39–asparagine 44, and glutamate 141. ATP contacts are provided by residues asparagine 185 and threonine 221 to glycine 226. The K(+) site is built by aspartate 247 and threonine 249. Glycine 252 to aspartate 253 serves as a coordination point for ATP. Aspartate 253 lines the substrate pocket. Aspartate 253 serves as the catalytic Proton acceptor; for ribokinase activity. Residues threonine 284, valine 287, glycine 289, and serine 293 each contribute to the K(+) site. Positions methionine 309–serine 540 are ribose-5-phosphate isomerase A. Substrate contacts are provided by residues serine 339 to threonine 342, aspartate 395 to aspartate 398, and lysine 408 to glycine 411. Glutamate 417 serves as the catalytic Proton acceptor; for ribose-5-phosphate isomerase activity. Residue lysine 435 participates in substrate binding.

This sequence in the N-terminal section; belongs to the carbohydrate kinase PfkB family. Ribokinase subfamily. It in the C-terminal section; belongs to the ribose 5-phosphate isomerase family. Requires Mg(2+) as cofactor.

It is found in the cytoplasm. The catalysed reaction is D-ribose + ATP = D-ribose 5-phosphate + ADP + H(+). It carries out the reaction aldehydo-D-ribose 5-phosphate = D-ribulose 5-phosphate. It participates in carbohydrate metabolism; D-ribose degradation; D-ribose 5-phosphate from beta-D-ribopyranose: step 2/2. It functions in the pathway carbohydrate degradation; pentose phosphate pathway; D-ribose 5-phosphate from D-ribulose 5-phosphate (non-oxidative stage): step 1/1. Its activity is regulated as follows. Activated by a monovalent cation that binds near, but not in, the active site. The most likely occupant of the site in vivo is potassium. Also activated by ammonium ion. Ion binding induces a conformational change that may alter substrate affinity. Bifunctional enzyme that catalyzes the phosphorylation of ribose at O-5 in a reaction requiring ATP and magnesium, and the reversible conversion of ribose 5-phosphate to ribulose 5-phosphate. The protein is Bifunctional ribokinase/ribose-5-phosphate isomerase A (rbsK/rbiA) of Fructilactobacillus sanfranciscensis (strain ATCC 27651 / DSM 20451 / JCM 5668 / CCUG 30143 / KCTC 3205 / NCIMB 702811 / NRRL B-3934 / L-12) (Lactobacillus sanfranciscensis).